We begin with the raw amino-acid sequence, 150 residues long: Deoxyuridine 5'-triphosphate nucleotidohydrolase (150 aa).

Residues 70–72 (RSG), Asn-82, 86–88 (LID), and Met-96 contribute to the substrate site.

Belongs to the dUTPase family. Mg(2+) is required as a cofactor.

It catalyses the reaction dUTP + H2O = dUMP + diphosphate + H(+). It functions in the pathway pyrimidine metabolism; dUMP biosynthesis; dUMP from dCTP (dUTP route): step 2/2. In terms of biological role, this enzyme is involved in nucleotide metabolism: it produces dUMP, the immediate precursor of thymidine nucleotides and it decreases the intracellular concentration of dUTP so that uracil cannot be incorporated into DNA. This is Deoxyuridine 5'-triphosphate nucleotidohydrolase from Baumannia cicadellinicola subsp. Homalodisca coagulata.